A 719-amino-acid chain; its full sequence is DNA ligase (719 aa).

Residues 42-46 (DAAYD), 92-93 (SL), and Glu126 contribute to the NAD(+) site. Lys128 functions as the N6-AMP-lysine intermediate in the catalytic mechanism. NAD(+) is bound by residues Arg149, Glu185, Lys301, and Lys325. 4 residues coordinate Zn(2+): Cys430, Cys433, Cys448, and Cys454. The BRCT domain occupies 640–719 (ATGSPVEGKT…DDWFKLVGED (80 aa)).

It belongs to the NAD-dependent DNA ligase family. LigA subfamily. It depends on Mg(2+) as a cofactor. Mn(2+) is required as a cofactor.

It carries out the reaction NAD(+) + (deoxyribonucleotide)n-3'-hydroxyl + 5'-phospho-(deoxyribonucleotide)m = (deoxyribonucleotide)n+m + AMP + beta-nicotinamide D-nucleotide.. Its function is as follows. DNA ligase that catalyzes the formation of phosphodiester linkages between 5'-phosphoryl and 3'-hydroxyl groups in double-stranded DNA using NAD as a coenzyme and as the energy source for the reaction. It is essential for DNA replication and repair of damaged DNA. The protein is DNA ligase of Brucella ovis (strain ATCC 25840 / 63/290 / NCTC 10512).